The following is a 143-amino-acid chain: Transcriptional regulator MraZ (143 aa).

SpoVT-AbrB domains are found at residues 5–47 (SHAP…PMAE) and 76–119 (AADD…DAQR).

This sequence belongs to the MraZ family. Forms oligomers.

It is found in the cytoplasm. Its subcellular location is the nucleoid. The chain is Transcriptional regulator MraZ from Frankia casuarinae (strain DSM 45818 / CECT 9043 / HFP020203 / CcI3).